A 913-amino-acid polypeptide reads, in one-letter code: Vacuolar membrane protease (913 aa).

Topologically, residues 1–15 (MMANYFRSTFKFRKT) are cytoplasmic. The chain crosses the membrane as a helical span at residues 16–36 (TVSTLFVLTVLVISILTWFDA). Residues 37–364 (NKYKSNLPDD…FFVVSARQLY (328 aa)) are Vacuolar-facing. An N-linked (GlcNAc...) asparagine glycan is attached at asparagine 117. Residues histidine 152 and aspartate 164 each contribute to the Zn(2+) site. Glutamate 196 acts as the Proton acceptor in catalysis. Residues glutamate 197, glutamate 222, and histidine 296 each coordinate Zn(2+). The chain crosses the membrane as a helical span at residues 365-385 (VWNIVLLCVLPITLILLRIVC). Residues 386–394 (NKLGTWRMP) lie on the Cytoplasmic side of the membrane. A helical membrane pass occupies residues 395-415 (TSALFTRIPFALFVSSFTIYF). Topologically, residues 416–431 (TKELLLQLNPTIWSRN) are vacuolar. The helical transmembrane segment at 432-452 (FILPFLFCISEFLLINTLVLA) threads the bilayer. Over 453–465 (LFEYLWPIQDFKT) the chain is Cytoplasmic. Residues 466-486 (LSLLELSAIAWLFLLKCTWDL) traverse the membrane as a helical segment. Residues 487-494 (SSSGFKAT) lie on the Vacuolar side of the membrane. Residues 495–515 (GVYPVTVFYLFISLASMFGLC) form a helical membrane-spanning segment. Residues 516-600 (SMCFGKRPNA…TLNYDWSAQY (85 aa)) lie on the Cytoplasmic side of the membrane. Over residues 540–552 (NDTHSIECPRQPE) the composition is skewed to basic and acidic residues. Residues 540–578 (NDTHSIECPRQPEDSETTETSPLINTPSSSVQSSPIASS) form a disordered region. Positions 557-566 (TETSPLINTP) are enriched in polar residues. Positions 567 to 578 (SSSVQSSPIASS) are enriched in low complexity. Residues 601–621 (LLAVPINAFLIWESLFNLFDA) traverse the membrane as a helical segment. At 622-634 (LSMTVQESNKATE) the chain is on the vacuolar side. A helical membrane pass occupies residues 635–655 (AVFKFAIYGAIFLCSPLLPFT). At 656 to 660 (TKLNR) the chain is on the cytoplasmic side. Residues 661–681 (FVVIILGVVTILAASFSLFAA) traverse the membrane as a helical segment. The Vacuolar portion of the chain corresponds to 682-913 (PYTELAPLKL…MVTIHKYLEL (232 aa)). Asparagine 729, asparagine 794, and asparagine 810 each carry an N-linked (GlcNAc...) asparagine glycan.

The protein belongs to the peptidase M28 family. The cofactor is Zn(2+).

It localises to the vacuole membrane. May be involved in vacuolar sorting and osmoregulation. In Kluyveromyces lactis (strain ATCC 8585 / CBS 2359 / DSM 70799 / NBRC 1267 / NRRL Y-1140 / WM37) (Yeast), this protein is Vacuolar membrane protease.